We begin with the raw amino-acid sequence, 176 residues long: Adenine phosphoribosyltransferase (176 aa).

The protein belongs to the purine/pyrimidine phosphoribosyltransferase family. As to quaternary structure, homodimer.

The protein resides in the cytoplasm. The catalysed reaction is AMP + diphosphate = 5-phospho-alpha-D-ribose 1-diphosphate + adenine. It participates in purine metabolism; AMP biosynthesis via salvage pathway; AMP from adenine: step 1/1. Catalyzes a salvage reaction resulting in the formation of AMP, that is energically less costly than de novo synthesis. The chain is Adenine phosphoribosyltransferase from Borreliella burgdorferi (strain ZS7) (Borrelia burgdorferi).